The primary structure comprises 187 residues: Elongation factor P (187 aa).

This sequence belongs to the elongation factor P family.

The protein resides in the cytoplasm. It participates in protein biosynthesis; polypeptide chain elongation. Involved in peptide bond synthesis. Stimulates efficient translation and peptide-bond synthesis on native or reconstituted 70S ribosomes in vitro. Probably functions indirectly by altering the affinity of the ribosome for aminoacyl-tRNA, thus increasing their reactivity as acceptors for peptidyl transferase. The polypeptide is Elongation factor P (efp) (Synechocystis sp. (strain ATCC 27184 / PCC 6803 / Kazusa)).